A 426-amino-acid polypeptide reads, in one-letter code: Serine hydroxymethyltransferase (426 aa).

Residues Leu-113 and 117-119 (GHL) each bind (6S)-5,6,7,8-tetrahydrofolate. An N6-(pyridoxal phosphate)lysine modification is found at Lys-222. 363–365 (SAF) serves as a coordination point for (6S)-5,6,7,8-tetrahydrofolate.

It belongs to the SHMT family. In terms of assembly, homodimer. Requires pyridoxal 5'-phosphate as cofactor.

Its subcellular location is the cytoplasm. The catalysed reaction is (6R)-5,10-methylene-5,6,7,8-tetrahydrofolate + glycine + H2O = (6S)-5,6,7,8-tetrahydrofolate + L-serine. It participates in one-carbon metabolism; tetrahydrofolate interconversion. Its pathway is amino-acid biosynthesis; glycine biosynthesis; glycine from L-serine: step 1/1. Catalyzes the reversible interconversion of serine and glycine with tetrahydrofolate (THF) serving as the one-carbon carrier. This reaction serves as the major source of one-carbon groups required for the biosynthesis of purines, thymidylate, methionine, and other important biomolecules. Also exhibits THF-independent aldolase activity toward beta-hydroxyamino acids, producing glycine and aldehydes, via a retro-aldol mechanism. The chain is Serine hydroxymethyltransferase from Bacteroides thetaiotaomicron (strain ATCC 29148 / DSM 2079 / JCM 5827 / CCUG 10774 / NCTC 10582 / VPI-5482 / E50).